Reading from the N-terminus, the 398-residue chain is S-adenosylmethionine synthase (398 aa).

His16 is a binding site for ATP. Asp18 provides a ligand contact to Mg(2+). K(+) is bound at residue Glu51. L-methionine-binding residues include Glu64 and Gln108. The segment at Gln108 to Ala118 is flexible loop. Residues Asp176–Lys178, Lys242–Phe243, Asp251, Arg257–Lys258, Ala274, and Lys278 each bind ATP. Asp251 contributes to the L-methionine binding site. Lys282 provides a ligand contact to L-methionine.

It belongs to the AdoMet synthase family. As to quaternary structure, homotetramer; dimer of dimers. It depends on Mg(2+) as a cofactor. The cofactor is K(+).

The protein localises to the cytoplasm. It catalyses the reaction L-methionine + ATP + H2O = S-adenosyl-L-methionine + phosphate + diphosphate. It participates in amino-acid biosynthesis; S-adenosyl-L-methionine biosynthesis; S-adenosyl-L-methionine from L-methionine: step 1/1. Its function is as follows. Catalyzes the formation of S-adenosylmethionine (AdoMet) from methionine and ATP. The overall synthetic reaction is composed of two sequential steps, AdoMet formation and the subsequent tripolyphosphate hydrolysis which occurs prior to release of AdoMet from the enzyme. The sequence is that of S-adenosylmethionine synthase from Rhodopseudomonas palustris (strain BisB5).